The primary structure comprises 251 residues: Chorismate mutase (251 aa).

The Chorismate mutase domain maps to 1-251 (MSLVNEKLKL…EVDYLLARLL (251 aa)). The L-tyrosine site is built by Arg74, Arg75, Asn134, Gly136, and Ser137. The L-tryptophan site is built by Asn134, Gly136, and Ser137.

Homodimer.

It is found in the cytoplasm. The enzyme catalyses chorismate = prephenate. Its pathway is metabolic intermediate biosynthesis; prephenate biosynthesis; prephenate from chorismate: step 1/1. Each dimer has two allosteric binding sites that can bind the regulatory effectors tryptophan or tyrosine. Can bind either one tryptophan or one tyrosine, two tryptophan or two tyrosine or one tryptophan and one tyrosine, which differentially affect the catalytic activity. Activated by tryptophan and subject to feedback inhibition by tyrosine. In the presence of both tryptophan and tyrosine, the enzyme is in the activated state. Catalyzes the Claisen rearrangement of chorismate to prephenate. Acts at the first branch point in the aromatic amino acid pathway where it steers biosynthesis towards phenylalanine and tyrosine, and away from tryptophan. This is Chorismate mutase from Schizosaccharomyces pombe (strain 972 / ATCC 24843) (Fission yeast).